We begin with the raw amino-acid sequence, 253 residues long: Triosephosphate isomerase (253 aa).

Residue 8–10 (NWK) participates in substrate binding. His93 (electrophile) is an active-site residue. Glu165 (proton acceptor) is an active-site residue. Substrate-binding positions include Gly171, Ser210, and 231 to 232 (GG).

Belongs to the triosephosphate isomerase family. Homodimer.

Its subcellular location is the cytoplasm. The catalysed reaction is D-glyceraldehyde 3-phosphate = dihydroxyacetone phosphate. It functions in the pathway carbohydrate biosynthesis; gluconeogenesis. It participates in carbohydrate degradation; glycolysis; D-glyceraldehyde 3-phosphate from glycerone phosphate: step 1/1. In terms of biological role, involved in the gluconeogenesis. Catalyzes stereospecifically the conversion of dihydroxyacetone phosphate (DHAP) to D-glyceraldehyde-3-phosphate (G3P). This is Triosephosphate isomerase from Francisella tularensis subsp. novicida (strain U112).